Consider the following 450-residue polypeptide: tRNA-2-methylthio-N(6)-dimethylallyladenosine synthase (450 aa).

The 115-residue stretch at 17 to 131 folds into the MTTase N-terminal domain; it reads KKFFVKTYGC…LNHVLDEVLA (115 aa). [4Fe-4S] cluster contacts are provided by Cys26, Cys62, Cys94, Cys168, Cys172, and Cys175. In terms of domain architecture, Radical SAM core spans 154-385; that stretch reads REDQIKAYVS…LQLQDTIYMK (232 aa). A TRAM domain is found at 388–450; it reads QAFLGQTVEV…SHQTLLGDLQ (63 aa).

Belongs to the methylthiotransferase family. MiaB subfamily. As to quaternary structure, monomer. It depends on [4Fe-4S] cluster as a cofactor.

It localises to the cytoplasm. The catalysed reaction is N(6)-dimethylallyladenosine(37) in tRNA + (sulfur carrier)-SH + AH2 + 2 S-adenosyl-L-methionine = 2-methylsulfanyl-N(6)-dimethylallyladenosine(37) in tRNA + (sulfur carrier)-H + 5'-deoxyadenosine + L-methionine + A + S-adenosyl-L-homocysteine + 2 H(+). Its function is as follows. Catalyzes the methylthiolation of N6-(dimethylallyl)adenosine (i(6)A), leading to the formation of 2-methylthio-N6-(dimethylallyl)adenosine (ms(2)i(6)A) at position 37 in tRNAs that read codons beginning with uridine. The protein is tRNA-2-methylthio-N(6)-dimethylallyladenosine synthase of Protochlamydia amoebophila (strain UWE25).